A 310-amino-acid polypeptide reads, in one-letter code: Oxygen-dependent coproporphyrinogen-III oxidase (310 aa).

Substrate is bound at residue S92. Residues H96 and H106 each contribute to the a divalent metal cation site. Residue H106 is the Proton donor of the active site. 108–110 (NVR) contacts substrate. Residues H145 and H175 each contribute to the a divalent metal cation site. Residues 240-275 (YVEFNLIWDRGTLFGLQSGGRTESILMSMPPLARWE) form an important for dimerization region. 258–260 (GGR) contacts substrate.

The protein belongs to the aerobic coproporphyrinogen-III oxidase family. As to quaternary structure, homodimer. A divalent metal cation serves as cofactor.

It is found in the cytoplasm. The enzyme catalyses coproporphyrinogen III + O2 + 2 H(+) = protoporphyrinogen IX + 2 CO2 + 2 H2O. The protein operates within porphyrin-containing compound metabolism; protoporphyrin-IX biosynthesis; protoporphyrinogen-IX from coproporphyrinogen-III (O2 route): step 1/1. In terms of biological role, involved in the heme biosynthesis. Catalyzes the aerobic oxidative decarboxylation of propionate groups of rings A and B of coproporphyrinogen-III to yield the vinyl groups in protoporphyrinogen-IX. This is Oxygen-dependent coproporphyrinogen-III oxidase from Pectobacterium atrosepticum (strain SCRI 1043 / ATCC BAA-672) (Erwinia carotovora subsp. atroseptica).